A 391-amino-acid chain; its full sequence is tRNA-specific 2-thiouridylase MnmA (391 aa).

ATP is bound by residues Gly-9–Ser-16 and Met-35. The segment at Asn-95–Asp-97 is interaction with target base in tRNA. The active-site Nucleophile is Cys-100. A disulfide bridge links Cys-100 with Cys-196. Gly-124 is a binding site for ATP. Positions Lys-146–Gln-148 are interaction with tRNA. Cys-196 (cysteine persulfide intermediate) is an active-site residue. Residues Arg-308–Tyr-309 are interaction with tRNA.

The protein belongs to the MnmA/TRMU family.

It is found in the cytoplasm. The catalysed reaction is S-sulfanyl-L-cysteinyl-[protein] + uridine(34) in tRNA + AH2 + ATP = 2-thiouridine(34) in tRNA + L-cysteinyl-[protein] + A + AMP + diphosphate + H(+). Functionally, catalyzes the 2-thiolation of uridine at the wobble position (U34) of tRNA, leading to the formation of s(2)U34. This chain is tRNA-specific 2-thiouridylase MnmA, found in Burkholderia cenocepacia (strain HI2424).